Consider the following 521-residue polypeptide: Glucose-1-phosphate adenylyltransferase small subunit, chloroplastic/amyloplastic (521 aa).

Residues 1–32 (MAASIGALKSSPSSNNCINERRNDSTRAVSSR) are disordered. Residues 1–72 (MAASIGALKS…RSPMIVSPKA (72 aa)) constitute a chloroplast transit peptide. Substrate is bound at residue K268. Residues 444 to 454 (TDADRKLLAAK) form an allosteric regulation region.

It belongs to the bacterial/plant glucose-1-phosphate adenylyltransferase family. As to quaternary structure, heterotetramer. In terms of tissue distribution, leaves and tubers.

The protein resides in the plastid. It localises to the chloroplast. Its subcellular location is the amyloplast. It carries out the reaction alpha-D-glucose 1-phosphate + ATP + H(+) = ADP-alpha-D-glucose + diphosphate. It functions in the pathway glycan biosynthesis; starch biosynthesis. With respect to regulation, activated by 3'phosphoglycerate, inhibited by orthophosphate. Allosteric regulation. In terms of biological role, this protein plays a role in synthesis of starch. It catalyzes the synthesis of the activated glycosyl donor, ADP-glucose from Glc-1-P and ATP. This Solanum tuberosum (Potato) protein is Glucose-1-phosphate adenylyltransferase small subunit, chloroplastic/amyloplastic.